The chain runs to 182 residues: Segregation and condensation protein B (182 aa).

It belongs to the ScpB family. Homodimer. Homodimerization may be required to stabilize the binding of ScpA to the Smc head domains. Component of a cohesin-like complex composed of ScpA, ScpB and the Smc homodimer, in which ScpA and ScpB bind to the head domain of Smc. The presence of the three proteins is required for the association of the complex with DNA.

The protein localises to the cytoplasm. Functionally, participates in chromosomal partition during cell division. May act via the formation of a condensin-like complex containing Smc and ScpA that pull DNA away from mid-cell into both cell halves. The chain is Segregation and condensation protein B from Staphylococcus saprophyticus subsp. saprophyticus (strain ATCC 15305 / DSM 20229 / NCIMB 8711 / NCTC 7292 / S-41).